The primary structure comprises 115 residues: Putative TGFB1-induced anti-apoptotic factor 1 (115 aa).

Not detectable in normal kidney and liver. Up-regulated in chronic and acute allograft rejection: expressed in the inflammatory infiltrate and in tubular epithelial cells.

The protein resides in the nucleus. Its function is as follows. Inhibits the cytotoxic effects of TNF-alpha and overexpressed TNF receptor adapters TRADD, FADD, and RIPK1. Involved in TGF-beta1 inhibition of IkappaB-alpha expression and suppression of TNF-mediated IkappaB-alpha degradation. The chain is Putative TGFB1-induced anti-apoptotic factor 1 (MYO18A) from Homo sapiens (Human).